The sequence spans 318 residues: NADH-ubiquinone oxidoreductase chain 1 (318 aa).

The next 8 helical transmembrane spans lie at 2-22 (PVIN…FLML), 69-89 (ILYI…WTPL), 100-120 (LGLL…LWSG), 146-166 (LALI…STLI), 171-191 (HSWL…STLA), 222-242 (LFFM…AMIF), 253-273 (ELHT…FLWI), and 294-314 (LPLT…TSGI).

Belongs to the complex I subunit 1 family. In terms of assembly, core subunit of respiratory chain NADH dehydrogenase (Complex I) which is composed of 45 different subunits.

It localises to the mitochondrion inner membrane. It carries out the reaction a ubiquinone + NADH + 5 H(+)(in) = a ubiquinol + NAD(+) + 4 H(+)(out). In terms of biological role, core subunit of the mitochondrial membrane respiratory chain NADH dehydrogenase (Complex I) which catalyzes electron transfer from NADH through the respiratory chain, using ubiquinone as an electron acceptor. Essential for the catalytic activity and assembly of complex I. The polypeptide is NADH-ubiquinone oxidoreductase chain 1 (MT-ND1) (Pongo pygmaeus (Bornean orangutan)).